The sequence spans 423 residues: ATP-dependent Clp protease ATP-binding subunit ClpX (423 aa).

Residues 1 to 50 (MTDDTEYRCSFCGKEHHQVDDLIAGPDVRICSECVVLSCEIVEDRRNEAL) form the ClpX-type ZB domain. Residues C9, C12, C31, and C34 each coordinate Zn(2+). 126–133 (PTGCGKTY) is a binding site for ATP.

It belongs to the ClpX chaperone family. Component of the ClpX-ClpP complex. Forms a hexameric ring that, in the presence of ATP, binds to fourteen ClpP subunits assembled into a disk-like structure with a central cavity, resembling the structure of eukaryotic proteasomes.

Functionally, ATP-dependent specificity component of the Clp protease. It directs the protease to specific substrates. Can perform chaperone functions in the absence of ClpP. The protein is ATP-dependent Clp protease ATP-binding subunit ClpX of Tropheryma whipplei (strain TW08/27) (Whipple's bacillus).